The primary structure comprises 499 residues: Protein nucleotidyltransferase YdiU (499 aa).

8 residues coordinate ATP: Gly95, Gly97, Arg98, Lys117, Asp129, Gly130, Arg180, and Arg187. The active-site Proton acceptor is the Asp256. Residues Asn257 and Asp266 each contribute to the Mg(2+) site. Asp266 contacts ATP.

The protein belongs to the SELO family. Mg(2+) serves as cofactor. It depends on Mn(2+) as a cofactor.

It catalyses the reaction L-seryl-[protein] + ATP = 3-O-(5'-adenylyl)-L-seryl-[protein] + diphosphate. The catalysed reaction is L-threonyl-[protein] + ATP = 3-O-(5'-adenylyl)-L-threonyl-[protein] + diphosphate. The enzyme catalyses L-tyrosyl-[protein] + ATP = O-(5'-adenylyl)-L-tyrosyl-[protein] + diphosphate. It carries out the reaction L-histidyl-[protein] + UTP = N(tele)-(5'-uridylyl)-L-histidyl-[protein] + diphosphate. It catalyses the reaction L-seryl-[protein] + UTP = O-(5'-uridylyl)-L-seryl-[protein] + diphosphate. The catalysed reaction is L-tyrosyl-[protein] + UTP = O-(5'-uridylyl)-L-tyrosyl-[protein] + diphosphate. In terms of biological role, nucleotidyltransferase involved in the post-translational modification of proteins. It can catalyze the addition of adenosine monophosphate (AMP) or uridine monophosphate (UMP) to a protein, resulting in modifications known as AMPylation and UMPylation. The protein is Protein nucleotidyltransferase YdiU of Dechloromonas aromatica (strain RCB).